Here is a 134-residue protein sequence, read N- to C-terminus: Acyl carrier protein, chloroplastic (134 aa).

The N-terminal 51 residues, 1–51, are a transit peptide targeting the chloroplast; that stretch reads MSTTFCSSVSMQATSLAATTRISFQKPALVSRTNLSFNLSRSIPTRLSVSC. In terms of domain architecture, Carrier spans 55–130; it reads PETVEKVSKI…EAAELIDELV (76 aa). Residue Ser90 is modified to O-(pantetheine 4'-phosphoryl)serine.

This sequence belongs to the acyl carrier protein (ACP) family. Post-translationally, 4'-phosphopantetheine is transferred from CoA to a specific serine of apo-ACP by acpS. This modification is essential for activity because fatty acids are bound in thioester linkage to the sulfhydryl of the prosthetic group. In terms of tissue distribution, seed.

It is found in the plastid. It localises to the chloroplast. Its pathway is lipid metabolism; fatty acid biosynthesis. Functionally, carrier of the growing fatty acid chain in fatty acid biosynthesis. In Brassica napus (Rape), this protein is Acyl carrier protein, chloroplastic (ACL1.A1).